The primary structure comprises 189 residues: Small ribosomal subunit protein uS5 (189 aa).

The region spanning 27-90 (FEERLLEAAR…EDAKKKTIRV (64 aa)) is the S5 DRBM domain.

Belongs to the universal ribosomal protein uS5 family. As to quaternary structure, part of the 30S ribosomal subunit. Contacts proteins S4 and S8.

Functionally, with S4 and S12 plays an important role in translational accuracy. Located at the back of the 30S subunit body where it stabilizes the conformation of the head with respect to the body. The protein is Small ribosomal subunit protein uS5 of Hydrogenobaculum sp. (strain Y04AAS1).